Here is a 365-residue protein sequence, read N- to C-terminus: Holliday junction branch migration complex subunit RuvB (365 aa).

The segment covering 1 to 10 (MAIVSSNAAS) has biased composition (polar residues). Positions 1–48 (MAIVSSNAASQRPRPDRGPDRVPNRVVDGARQAEDDRDPGRVGAKEDS) are disordered. Basic and acidic residues-rich tracts occupy residues 13–23 (PRPDRGPDRVP) and 31–48 (RQAE…KEDS). Residues 13–210 (PRPDRGPDRV…FGLIQRLEFY (198 aa)) form a large ATPase domain (RuvB-L) region. Residues leucine 49, arginine 50, glycine 91, lysine 94, threonine 95, threonine 96, arginine 200, tyrosine 210, and arginine 247 each coordinate ATP. Position 95 (threonine 95) interacts with Mg(2+). A small ATPAse domain (RuvB-S) region spans residues 211-282 (GLEDLQAIVE…LVDEALTLHR (72 aa)). The interval 285–365 (GRGLDASDRR…GWPYPQEQAA (81 aa)) is head domain (RuvB-H). Residues arginine 340 and arginine 345 each contribute to the DNA site.

This sequence belongs to the RuvB family. As to quaternary structure, homohexamer. Forms an RuvA(8)-RuvB(12)-Holliday junction (HJ) complex. HJ DNA is sandwiched between 2 RuvA tetramers; dsDNA enters through RuvA and exits via RuvB. An RuvB hexamer assembles on each DNA strand where it exits the tetramer. Each RuvB hexamer is contacted by two RuvA subunits (via domain III) on 2 adjacent RuvB subunits; this complex drives branch migration. In the full resolvosome a probable DNA-RuvA(4)-RuvB(12)-RuvC(2) complex forms which resolves the HJ.

It localises to the cytoplasm. It carries out the reaction ATP + H2O = ADP + phosphate + H(+). In terms of biological role, the RuvA-RuvB-RuvC complex processes Holliday junction (HJ) DNA during genetic recombination and DNA repair, while the RuvA-RuvB complex plays an important role in the rescue of blocked DNA replication forks via replication fork reversal (RFR). RuvA specifically binds to HJ cruciform DNA, conferring on it an open structure. The RuvB hexamer acts as an ATP-dependent pump, pulling dsDNA into and through the RuvAB complex. RuvB forms 2 homohexamers on either side of HJ DNA bound by 1 or 2 RuvA tetramers; 4 subunits per hexamer contact DNA at a time. Coordinated motions by a converter formed by DNA-disengaged RuvB subunits stimulates ATP hydrolysis and nucleotide exchange. Immobilization of the converter enables RuvB to convert the ATP-contained energy into a lever motion, pulling 2 nucleotides of DNA out of the RuvA tetramer per ATP hydrolyzed, thus driving DNA branch migration. The RuvB motors rotate together with the DNA substrate, which together with the progressing nucleotide cycle form the mechanistic basis for DNA recombination by continuous HJ branch migration. Branch migration allows RuvC to scan DNA until it finds its consensus sequence, where it cleaves and resolves cruciform DNA. In Synechococcus sp. (strain WH7803), this protein is Holliday junction branch migration complex subunit RuvB.